The sequence spans 96 residues: Large ribosomal subunit protein uL18m (96 aa).

It belongs to the universal ribosomal protein uL18 family.

It localises to the mitochondrion. This chain is Large ribosomal subunit protein uL18m (RPL18), found in Reclinomonas americana.